We begin with the raw amino-acid sequence, 243 residues long: Small ribosomal subunit protein mS23 (243 aa).

It belongs to the mitochondrion-specific ribosomal protein mS23 family. In terms of assembly, component of the mitochondrial small ribosomal subunit.

Its subcellular location is the mitochondrion. This is Small ribosomal subunit protein mS23 (rsm25) from Emericella nidulans (strain FGSC A4 / ATCC 38163 / CBS 112.46 / NRRL 194 / M139) (Aspergillus nidulans).